The following is a 196-amino-acid chain: Cytochrome c biogenesis ATP-binding export protein CcmA (196 aa).

One can recognise an ABC transporter domain in the interval 2–195 (LSFHQLKFNI…HIKSAQILQL (194 aa)). 34–41 (GANGCGKT) is a binding site for ATP.

Belongs to the ABC transporter superfamily. CcmA exporter (TC 3.A.1.107) family. As to quaternary structure, the complex is composed of two ATP-binding proteins (CcmA) and two transmembrane proteins (CcmB).

The protein localises to the cell inner membrane. It carries out the reaction heme b(in) + ATP + H2O = heme b(out) + ADP + phosphate + H(+). Functionally, part of the ABC transporter complex CcmAB involved in the biogenesis of c-type cytochromes; once thought to export heme, this seems not to be the case, but its exact role is uncertain. Responsible for energy coupling to the transport system. The polypeptide is Cytochrome c biogenesis ATP-binding export protein CcmA (Rickettsia bellii (strain RML369-C)).